We begin with the raw amino-acid sequence, 305 residues long: Leucine-rich repeat-containing protein 25 (305 aa).

The N-terminal stretch at 1-20 (MGGTLAWTLLLPLLLRESDS) is a signal peptide. Residues 21 to 165 (LEPSCTVSSA…SCAPGLASAT (145 aa)) are Extracellular-facing. LRR repeat units follow at residues 39–59 (SATCLNFSGLSLSLPHNQSLR), 62–83 (NVILLDLSGNGLRELPVTFFAH), and 86–107 (KLEVLNVLRNPLSRVDGALAAR). N-linked (GlcNAc...) asparagine glycosylation is found at Asn44 and Asn55. 2 N-linked (GlcNAc...) asparagine glycosylation sites follow: Asn130 and Asn148. Residues 166–186 (IGAVVVSGCLLLGLAIAGPVL) form a helical membrane-spanning segment. The Cytoplasmic portion of the chain corresponds to 187 to 305 (AWRLWRCRVA…DEEEYVIPGH (119 aa)). Residues 204–229 (PWAAQDGPKPGLGLQPRYGSRSAPKP) form a disordered region. Tyr284 is modified (phosphotyrosine).

Interacts with RIGI. Interacts with SQSTM1. Interacts with p65/RELA; this interaction promotes the degradation of RELA through autophagy. As to expression, expressed in plasmacytoid dendritic cells (PDC), monocyte-derived dendritic cells (MDDC), granulocytes, monocytes, B-lymphocytes, peripheral blood leukocytes, spleen, bone marrow, and, to a lesser extent, lymph nodes, fetal liver, and appendix but not in thymus.

The protein localises to the membrane. Its subcellular location is the cytoplasm. Plays a role in the inhibition of RLR-mediated type I interferon signaling pathway by targeting RIGI for autophagic degradation. Interacts specifically with ISG15-associated RIGI to promote interaction between RIGI and the autophagic cargo receptor p62/SQSTM1 to mediate RIGI degradation via selective autophagy. Also plays a role in the inhibition of NF-kappa-B signaling pathway and inflammatory response by promoting the degradation of p65/RELA. The polypeptide is Leucine-rich repeat-containing protein 25 (LRRC25) (Homo sapiens (Human)).